The chain runs to 485 residues: Aspartyl/glutamyl-tRNA(Asn/Gln) amidotransferase subunit B (485 aa).

The protein belongs to the GatB/GatE family. GatB subfamily. In terms of assembly, heterotrimer of A, B and C subunits.

It carries out the reaction L-glutamyl-tRNA(Gln) + L-glutamine + ATP + H2O = L-glutaminyl-tRNA(Gln) + L-glutamate + ADP + phosphate + H(+). It catalyses the reaction L-aspartyl-tRNA(Asn) + L-glutamine + ATP + H2O = L-asparaginyl-tRNA(Asn) + L-glutamate + ADP + phosphate + 2 H(+). Functionally, allows the formation of correctly charged Asn-tRNA(Asn) or Gln-tRNA(Gln) through the transamidation of misacylated Asp-tRNA(Asn) or Glu-tRNA(Gln) in organisms which lack either or both of asparaginyl-tRNA or glutaminyl-tRNA synthetases. The reaction takes place in the presence of glutamine and ATP through an activated phospho-Asp-tRNA(Asn) or phospho-Glu-tRNA(Gln). The protein is Aspartyl/glutamyl-tRNA(Asn/Gln) amidotransferase subunit B of Borreliella afzelii (strain PKo) (Borrelia afzelii).